A 471-amino-acid chain; its full sequence is Mannose-1-phosphate guanylyltransferase (471 aa).

This sequence belongs to the mannose-6-phosphate isomerase type 2 family.

It catalyses the reaction alpha-D-mannose 1-phosphate + GTP + H(+) = GDP-alpha-D-mannose + diphosphate. It participates in nucleotide-sugar biosynthesis; GDP-alpha-D-mannose biosynthesis; GDP-alpha-D-mannose from alpha-D-mannose 1-phosphate (GTP route): step 1/1. The protein operates within bacterial outer membrane biogenesis; LPS O-antigen biosynthesis. Functionally, involved in GDP-mannose biosynthesis which serves as the activated sugar nucleotide precursor for mannose residues in cell surface polysaccharides. This enzyme participates in synthesis of the LPS O9 antigen. This chain is Mannose-1-phosphate guanylyltransferase (manC), found in Escherichia coli.